The chain runs to 183 residues: ESX-1 secretion-associated protein EspH (183 aa).

Residues 1-16 (MVDPPGNDDDHGDLDA) are compositionally biased toward acidic residues. The interval 1 to 32 (MVDPPGNDDDHGDLDALDFSAAHTNEASPLDA) is disordered.

This chain is ESX-1 secretion-associated protein EspH, found in Mycobacterium tuberculosis (strain ATCC 25618 / H37Rv).